The sequence spans 122 residues: Large ribosomal subunit protein uL14 (122 aa).

Belongs to the universal ribosomal protein uL14 family. In terms of assembly, part of the 50S ribosomal subunit. Forms a cluster with proteins L3 and L19. In the 70S ribosome, L14 and L19 interact and together make contacts with the 16S rRNA in bridges B5 and B8.

Binds to 23S rRNA. Forms part of two intersubunit bridges in the 70S ribosome. The chain is Large ribosomal subunit protein uL14 from Beijerinckia indica subsp. indica (strain ATCC 9039 / DSM 1715 / NCIMB 8712).